We begin with the raw amino-acid sequence, 324 residues long: Lactonase drp35 (324 aa).

Glu-47, Ser-109, Gly-111, Asp-129, Thr-132, Tyr-134, Asp-137, Asn-184, Asp-235, and Ser-236 together coordinate Ca(2+). The Proton donor role is filled by Asp-235.

It belongs to the SMP-30/CGR1 family. Ca(2+) is required as a cofactor.

The protein localises to the cytoplasm. In terms of biological role, exhibits lactonase activity. Acts in cells with perturbed membrane integrity and is possibly related to the membrane homeostasis. The polypeptide is Lactonase drp35 (drp35) (Staphylococcus aureus (strain MRSA252)).